We begin with the raw amino-acid sequence, 524 residues long: Probable inorganic phosphate transporter 1-2 (524 aa).

At 1–24 the chain is on the cytoplasmic side; sequence MAEQQLGVLKALDVAKTQLYHFTA. Residues 25 to 45 form a helical membrane-spanning segment; sequence IVIAGMGFFTDAYDLFCVSLV. The Extracellular portion of the chain corresponds to 46–70; that stretch reads TKLLGRIYYFNPESAKPGSLPPHVA. A helical membrane pass occupies residues 71 to 91; the sequence is AAVNGVALCGTLSGQLFFGWL. Residues 92–99 are Cytoplasmic-facing; it reads GDKLGRKK. A helical transmembrane segment spans residues 100–120; it reads VYGLTLIMMILCSVASGLSFG. Residues 121–131 are Extracellular-facing; sequence NEAKGVMTTLC. A helical membrane pass occupies residues 132 to 152; sequence FFRFWLGFGIGGDYPLSATIM. At 153 to 161 the chain is on the cytoplasmic side; that stretch reads SEYANKKTR. A helical membrane pass occupies residues 162–182; the sequence is GAFIAAVFAMQGVGILAGGFV. Topologically, residues 183–211 are extracellular; sequence ALAVSSIFDKKFPAPTYAVNRALSTPPQV. The helical transmembrane segment at 212 to 232 threads the bilayer; that stretch reads DYIWRIIVMFGALPAALTYYW. Over 233–292 the chain is Cytoplasmic; the sequence is RMKMPETARYTALVAKNIKQATADMSKVLQTDIELEERVEDDVKDPRQNYGLFSKEFLRR. A helical membrane pass occupies residues 293-313; the sequence is HGLHLLGTTSTWFLLDIAFYS. At 314–348 the chain is on the extracellular side; sequence QNLFQKDIFSAIGWIPKAATMNATHEVFRIARAQT. The helical transmembrane segment at 349–369 threads the bilayer; sequence LIALCSTVPGYWFTVAFIDTI. The Cytoplasmic portion of the chain corresponds to 370 to 371; sequence GR. The chain crosses the membrane as a helical span at residues 372–392; that stretch reads FKIQLNGFFMMTVFMFAIAFP. The Extracellular segment spans residues 393-402; sequence YNHWIKPENR. The helical transmembrane segment at 403–423 threads the bilayer; the sequence is IGFVVMYSLTFFFANFGPNAT. The Cytoplasmic segment spans residues 424 to 441; the sequence is TFIVPAEIFPARLRSTCH. The chain crosses the membrane as a helical span at residues 442-462; that stretch reads GISAAAGKAGAIIGAFGFLYA. At 463–484 the chain is on the extracellular side; it reads AQNQDKAKVDAGYPPGIGVKNS. The helical transmembrane segment at 485 to 505 threads the bilayer; it reads LIVLGVLNFIGMLFTFLVPEP. At 506–524 the chain is on the cytoplasmic side; sequence KGKSLEELSGEAEVSHDEK.

The protein belongs to the major facilitator superfamily. Phosphate:H(+) symporter (TC 2.A.1.9) family. As to expression, root specific, especially in trichoblasts. In mature plants, localized in root cortical cells and young lateral roots.

The protein localises to the membrane. In terms of biological role, high-affinity transporter for external inorganic phosphate. This chain is Probable inorganic phosphate transporter 1-2 (PHT1-2), found in Arabidopsis thaliana (Mouse-ear cress).